The following is a 549-amino-acid chain: Leiomodin-2 (549 aa).

The interval 1 to 42 (MSTFGYRRGLSKYESIDEDELLASLTAEELKELERELEDIEP) is tropomyosin-binding. An interaction with tropomyosin alpha region spans residues 1–47 (MSTFGYRRGLSKYESIDEDELLASLTAEELKELERELEDIEPDRNLP). 3 interaction with actin regions span residues 1 to 164 (MSTF…PDNS), 165 to 499 (KPKT…KEIK), and 523 to 542 (AHENLMEAIRGSSIRQLRRV). Residues S11, S15, and S24 each carry the phosphoserine modification. 4 disordered regions span residues 91–166 (KLAE…NSKP), 179–200 (TNGNSGGTQRNTESPAAIHPCG), 358–455 (MDKQ…PGKK), and 469–534 (ESAQ…IRGS). Composition is skewed to acidic residues over residues 95-105 (EDKEESEEELI) and 113-143 (VSEEVCTEEEEESTEEEEEEEEEDSEEEEVT). Polar residues-rich tracts occupy residues 150 to 163 (INGTVSHNGVNPDN) and 179 to 192 (TNGNSGGTQRNTES). Basic and acidic residues predominate over residues 358–376 (MDKQRQKRMQEQKQQEGHD). The segment covering 390-401 (TPGSSPYASPRQ) has biased composition (polar residues). S406 carries the post-translational modification Phosphoserine. Over residues 420-452 (PPSPVAPPPPPPPPPLPPHMLPPPPPPPAPPLP) the composition is skewed to pro residues. Residues 457 to 515 (ITRNIAEVIKQQESAQRALQNGQRKKKGKKVKKQPNNILKEIKNSLRSVQEKKMEESSR) are a coiled coil. Polar residues predominate over residues 469-478 (ESAQRALQNG). Over residues 479-489 (QRKKKGKKVKK) the composition is skewed to basic residues. Residues 496-514 (KEIKNSLRSVQEKKMEESS) are compositionally biased toward basic and acidic residues. One can recognise a WH2 domain in the interval 523–542 (AHENLMEAIRGSSIRQLRRV).

The protein belongs to the tropomodulin family. As to quaternary structure, can bind at least three actin monomers and thereby provides a nucleus for actin filament formation. Interacts (via N-terminus) with tropomyosin alpha (TPM1) (via N-terminus). May also interact with TPM2 (via N-terminus). Interacts with FLII.

The protein localises to the cytoplasm. It localises to the myofibril. Its subcellular location is the sarcomere. It is found in the m line. The protein resides in the cytoskeleton. Mediates nucleation of actin filaments and thereby promotes actin polymerization. Plays a role in the regulation of actin filament length. Required for normal sarcomere organization in the heart, and for normal heart function. This chain is Leiomodin-2 (Lmod2), found in Rattus norvegicus (Rat).